Here is a 319-residue protein sequence, read N- to C-terminus: MNATTSAAAYGLLAGADLEAELAQARVADGDARDAAVLERDGSASVVPLARRRPGSPVSDDAVTLSGVSKRFGARTVLDNVELGIARGSFVAIVGRSGCGKSTLLRLVAGLEQPSSGALETRGEGGGELDTRIMYQDARLLPWKTVLQNVMLGLGRGARDQARAVLDEVGLLERANDWPAQLSGGQRQRVALARALVHRPQLLLLDEPLGALDALTRIEMHALIERLWREHRFTALLVTHDVQEAVALGDRILLIEQGRVALDQPVPLDRPRARASAAFAALEDRVLKRVLAGGPGVSDHGAPHEADNVRPVGQIRWAV.

Residues 63–282 (VTLSGVSKRF…ARASAAFAAL (220 aa)) form the ABC transporter domain. Residue 95–102 (GRSGCGKS) coordinates ATP.

Belongs to the ABC transporter superfamily. Aliphatic sulfonates importer (TC 3.A.1.17.2) family. The complex is composed of two ATP-binding proteins (SsuB), two transmembrane proteins (SsuC) and a solute-binding protein (SsuA).

It is found in the cell inner membrane. The enzyme catalyses ATP + H2O + aliphatic sulfonate-[sulfonate-binding protein]Side 1 = ADP + phosphate + aliphatic sulfonateSide 2 + [sulfonate-binding protein]Side 1.. Functionally, part of the ABC transporter complex SsuABC involved in aliphatic sulfonates import. Responsible for energy coupling to the transport system. This chain is Aliphatic sulfonates import ATP-binding protein SsuB 1, found in Burkholderia lata (strain ATCC 17760 / DSM 23089 / LMG 22485 / NCIMB 9086 / R18194 / 383).